The sequence spans 94 residues: Sulfocarbamoylase-1 (94 aa).

Homodimer. As to expression, ubiquitous (at protein level). Highest levels of expression in crystalline style followed by digestive gland and mantle.

Its activity is regulated as follows. Strongly inhibited by the serine proteinase inhibitor AEBSF. Weakly inhibited by the proteinase inhibitors BSF and aprotinin, and by EDTA. Not inhibited by the proteinase inhibitors bestatin, E-64 and leupeptin. Functionally, hydrolysis of sulfocarbamoyl esters of paralytic shellfish toxins. Does not hydrolyze the carbamoyl esters of paralytic shellfish toxins. Ester hydrolysis is significantly affected by the stereochemistry of sulfate esters at C-11 of the substrate toxin. The chain is Sulfocarbamoylase-1 from Megangulus venulosus (Japanese bivalve).